Consider the following 649-residue polypeptide: Sodium/nucleoside cotransporter 1 (649 aa).

Over 1–80 (MENDPSRRRE…ARSFCREHMQ (80 aa)) the chain is Cytoplasmic. A helical transmembrane segment spans residues 81–104 (LFRWIGTGLLCTGLSAFLLVACLL). Over 105–109 (DFQRA) the chain is Extracellular. A helical membrane pass occupies residues 110 to 128 (LALFVLTCVVLTFLGHRLL). Residues 129–147 (KRLLGPKLRRFLKPQGHPR) are Cytoplasmic-facing. The helical transmembrane segment at 148–167 (LLLWFKRGLALAAFLGLVLW) threads the bilayer. Residues 168-178 (LSLDTSQRPEQ) are Extracellular-facing. A helical membrane pass occupies residues 179 to 195 (LVSFAGICVFVALLFAC). Residues 196–201 (SKHHCA) lie on the Cytoplasmic side of the membrane. Residues 202 to 222 (VSWRAVSWGLGLQFVLGLLVI) form a helical membrane-spanning segment. Over 223 to 261 (RTEPGFIAFEWLGEQIRIFLSYTKAGSSFVFGEALVKDV) the chain is Extracellular. A helical transmembrane segment spans residues 262 to 283 (FAFQVLPIIVFFSCVISVLYHV). Topologically, residues 284–294 (GLMQWVILKIA) are cytoplasmic. A helical membrane pass occupies residues 295–318 (WLMQVTMGTTATETLSVAGNIFVS). Residues 319 to 337 (QTEAPLLIRPYLADMTLSE) are Extracellular-facing. The chain crosses the membrane as a helical span at residues 338 to 360 (VHVVMTGGYATIAGSLLGAYISF). The Cytoplasmic segment spans residues 361-366 (GIDATS). Residues 367-386 (LIAASVMAAPCALALSKLVY) traverse the membrane as a helical segment. Over 387-423 (PEVEESKFRREEGVKLTYGDAQNLIEAASTGAAISVK) the chain is Extracellular. A helical transmembrane segment spans residues 424 to 446 (VVANIAANLIAFLAVLDFINAAL). Over 447-457 (SWLGDMVDIQG) the chain is Cytoplasmic. Residues 458–479 (LSFQLICSYILRPVAFLMGVAW) traverse the membrane as a helical segment. Over 480-534 (EDCPVVAELLGIKLFLNEFVAYQDLSKYKQRRLAGAEEWVGDRKQWISVRAEVLT) the chain is Extracellular. Residues 535–558 (TFALCGFANFSSIGIMLGGLTSMV) form a helical membrane-spanning segment. Residues 559 to 569 (PQRKSDFSQIV) are Cytoplasmic-facing. The chain crosses the membrane as a helical span at residues 570–592 (LRALFTGACVSLVNACMAGILYM). The Extracellular portion of the chain corresponds to 593–649 (PRGAEVDCMSLLNTTLSSSSFEIYQCCREAFQSVNPEFSPEALDNCCRFYNHTICAQ). Residues Asn605 and Asn643 are each glycosylated (N-linked (GlcNAc...) asparagine).

It belongs to the concentrative nucleoside transporter (CNT) (TC 2.A.41) family. Post-translationally, N-glycosylated. N-glycosylation is required for localization to the plasma membrane and the transporter activity. Expressed in kidney.

It localises to the cell membrane. It is found in the apical cell membrane. It catalyses the reaction uridine(out) + Na(+)(out) = uridine(in) + Na(+)(in). The catalysed reaction is thymidine(out) + Na(+)(out) = thymidine(in) + Na(+)(in). The enzyme catalyses cytidine(out) + Na(+)(out) = cytidine(in) + Na(+)(in). It carries out the reaction adenosine(out) + Na(+)(out) = adenosine(in) + Na(+)(in). With respect to regulation, due to its high apparent affinity but slow transport, adenosine could act as a negative regulator of pyrimidine transport under some conditions. Sodium and pyrimidine nucleoside symporter of the plasma membrane that imports uridine, thymidine and cytidine into cells by coupling their transport to the transmembrane sodium electrochemical gradient. Also transports adenosine, an atypical substrate transported with high apparent affinity, but low maximum velocity. Therefore, exhibits the transport characteristics of the nucleoside transport system cit or N2 subtype (N2/cit). Involved in renal nucleoside (re)absorption. In Homo sapiens (Human), this protein is Sodium/nucleoside cotransporter 1.